A 390-amino-acid polypeptide reads, in one-letter code: S-adenosylmethionine synthase (390 aa).

Residue Glu-12 coordinates Mg(2+). His-18 contacts ATP. Glu-46 provides a ligand contact to K(+). L-methionine-binding residues include Glu-59 and Gln-102. Residues 170–172, 238–241, Asp-249, 255–256, Ala-272, Lys-276, and Lys-280 contribute to the ATP site; these read DGK, SGRF, and RK. Position 249 (Asp-249) interacts with L-methionine. Lys-280 contributes to the L-methionine binding site.

Belongs to the AdoMet synthase family. In terms of assembly, homotetramer. It depends on Mn(2+) as a cofactor. The cofactor is Mg(2+). Co(2+) is required as a cofactor. Requires K(+) as cofactor.

It localises to the cytoplasm. It carries out the reaction L-methionine + ATP + H2O = S-adenosyl-L-methionine + phosphate + diphosphate. Its pathway is amino-acid biosynthesis; S-adenosyl-L-methionine biosynthesis; S-adenosyl-L-methionine from L-methionine: step 1/1. Functionally, catalyzes the formation of S-adenosylmethionine from methionine and ATP. The reaction comprises two steps that are both catalyzed by the same enzyme: formation of S-adenosylmethionine (AdoMet) and triphosphate, and subsequent hydrolysis of the triphosphate. This Chlamydomonas reinhardtii (Chlamydomonas smithii) protein is S-adenosylmethionine synthase (METM).